A 312-amino-acid polypeptide reads, in one-letter code: Aspartate carbamoyltransferase catalytic subunit (312 aa).

Carbamoyl phosphate contacts are provided by Arg58 and Thr59. Lys86 is an L-aspartate binding site. Carbamoyl phosphate is bound by residues Arg108, His136, and Gln139. L-aspartate is bound by residues Arg169 and Arg223. Positions 264 and 265 each coordinate carbamoyl phosphate.

This sequence belongs to the aspartate/ornithine carbamoyltransferase superfamily. ATCase family. As to quaternary structure, heterododecamer (2C3:3R2) of six catalytic PyrB chains organized as two trimers (C3), and six regulatory PyrI chains organized as three dimers (R2).

The enzyme catalyses carbamoyl phosphate + L-aspartate = N-carbamoyl-L-aspartate + phosphate + H(+). The protein operates within pyrimidine metabolism; UMP biosynthesis via de novo pathway; (S)-dihydroorotate from bicarbonate: step 2/3. Catalyzes the condensation of carbamoyl phosphate and aspartate to form carbamoyl aspartate and inorganic phosphate, the committed step in the de novo pyrimidine nucleotide biosynthesis pathway. The chain is Aspartate carbamoyltransferase catalytic subunit from Desulforamulus reducens (strain ATCC BAA-1160 / DSM 100696 / MI-1) (Desulfotomaculum reducens).